Reading from the N-terminus, the 427-residue chain is Serine--tRNA ligase (427 aa).

L-serine is bound at residue 231–233 (TAE). 262–264 (RSE) serves as a coordination point for ATP. Glutamate 285 is an L-serine binding site. Position 349-352 (349-352 (EISS)) interacts with ATP. Serine 385 lines the L-serine pocket.

Belongs to the class-II aminoacyl-tRNA synthetase family. Type-1 seryl-tRNA synthetase subfamily. In terms of assembly, homodimer. The tRNA molecule binds across the dimer.

Its subcellular location is the cytoplasm. The enzyme catalyses tRNA(Ser) + L-serine + ATP = L-seryl-tRNA(Ser) + AMP + diphosphate + H(+). It catalyses the reaction tRNA(Sec) + L-serine + ATP = L-seryl-tRNA(Sec) + AMP + diphosphate + H(+). It functions in the pathway aminoacyl-tRNA biosynthesis; selenocysteinyl-tRNA(Sec) biosynthesis; L-seryl-tRNA(Sec) from L-serine and tRNA(Sec): step 1/1. Functionally, catalyzes the attachment of serine to tRNA(Ser). Is also able to aminoacylate tRNA(Sec) with serine, to form the misacylated tRNA L-seryl-tRNA(Sec), which will be further converted into selenocysteinyl-tRNA(Sec). The protein is Serine--tRNA ligase of Rhizobium leguminosarum bv. trifolii (strain WSM2304).